Consider the following 632-residue polypeptide: Protein NSP-INTERACTING KINASE 3 (632 aa).

Residues Met-1 to Ala-25 form the signal peptide. Over Thr-26–Ala-238 the chain is Extracellular. An N-linked (GlcNAc...) asparagine glycan is attached at Asn-96. LRR repeat units follow at residues Leu-97–Leu-121, Glu-122–Leu-145, Asn-147–Lys-168, and Ile-169–Thr-193. N-linked (GlcNAc...) asparagine glycosylation is found at Asn-131, Asn-155, Asn-181, and Asn-210. Residues Leu-239–Leu-259 form a helical membrane-spanning segment. The Cytoplasmic segment spans residues Trp-260 to Arg-632. The residue at position 298 (Thr-298) is a Phosphothreonine. Residues Phe-301–Glu-584 enclose the Protein kinase domain. ATP is bound at residue Leu-307–Val-315. Thr-324 carries the post-translational modification Phosphothreonine. An ATP-binding site is contributed by Lys-329. Residues Ser-382 and Ser-385 each carry the phosphoserine modification. An interaction with geminivirus NSP protein region spans residues Tyr-415–Leu-495. Asp-428 acts as the Proton acceptor in catalysis. 3 positions are modified to phosphothreonine: Thr-461, Thr-462, and Thr-467. A Phosphotyrosine modification is found at Tyr-475. Ser-477 bears the Phosphoserine mark. A Phosphothreonine modification is found at Thr-478. Phosphoserine is present on Ser-482. Thr-557 is modified (phosphothreonine).

It belongs to the protein kinase superfamily. Ser/Thr protein kinase family. Oligomer. Interacts with geminivirus nuclear shuttle protein (NSP). Autophosphorylated. As to expression, expressed in seedlings, leaves and flowers.

The protein localises to the cell membrane. The enzyme catalyses L-seryl-[protein] + ATP = O-phospho-L-seryl-[protein] + ADP + H(+). The catalysed reaction is L-threonyl-[protein] + ATP = O-phospho-L-threonyl-[protein] + ADP + H(+). Its activity is regulated as follows. Inhibited by the viral nuclear shuttle protein (NSP) that binds to the region required for oligomerization. Its function is as follows. Involved in defense response to geminivirus infection. This is Protein NSP-INTERACTING KINASE 3 (NIK3) from Arabidopsis thaliana (Mouse-ear cress).